A 116-amino-acid chain; its full sequence is Large ribosomal subunit protein uL22 (116 aa).

Belongs to the universal ribosomal protein uL22 family. In terms of assembly, part of the 50S ribosomal subunit.

Its function is as follows. This protein binds specifically to 23S rRNA; its binding is stimulated by other ribosomal proteins, e.g. L4, L17, and L20. It is important during the early stages of 50S assembly. It makes multiple contacts with different domains of the 23S rRNA in the assembled 50S subunit and ribosome. The globular domain of the protein is located near the polypeptide exit tunnel on the outside of the subunit, while an extended beta-hairpin is found that lines the wall of the exit tunnel in the center of the 70S ribosome. The polypeptide is Large ribosomal subunit protein uL22 (Wolbachia pipientis subsp. Culex pipiens (strain wPip)).